The following is a 148-amino-acid chain: Large ribosomal subunit protein uL13 (148 aa).

Belongs to the universal ribosomal protein uL13 family. Part of the 50S ribosomal subunit.

Its function is as follows. This protein is one of the early assembly proteins of the 50S ribosomal subunit, although it is not seen to bind rRNA by itself. It is important during the early stages of 50S assembly. This Oenococcus oeni (strain ATCC BAA-331 / PSU-1) protein is Large ribosomal subunit protein uL13.